Reading from the N-terminus, the 601-residue chain is Terpinolene synthase, chloroplastic (601 aa).

A chloroplast-targeting transit peptide spans 1-32; it reads MSTFVISNSMHVGISFSFLHKLPQTPPPQVVC. Mg(2+) is bound by residues Asp354, Asp358, Asp498, Thr502, and Glu506. The DDXXD motif signature appears at 354 to 358; that stretch reads DDVYD.

The protein belongs to the terpene synthase family. Tpsd subfamily. It depends on Mg(2+) as a cofactor. The cofactor is Mn(2+).

It localises to the plastid. The protein resides in the chloroplast. It carries out the reaction (2E)-geranyl diphosphate = terpinolene + diphosphate. Its pathway is secondary metabolite biosynthesis; terpenoid biosynthesis. In terms of biological role, monoterpene synthase that catalyzes the formation of terpinolene and other monoterpenes from geranyl diphosphate. The sequence is that of Terpinolene synthase, chloroplastic (TES) from Ocimum basilicum (Sweet basil).